Consider the following 188-residue polypeptide: Elongation factor P (188 aa).

Position 34 is an N6-(3,6-diaminohexanoyl)-5-hydroxylysine (Lys34).

Belongs to the elongation factor P family. May be beta-lysylated on the epsilon-amino group of Lys-34 by the combined action of EpmA and EpmB, and then hydroxylated on the C5 position of the same residue by EpmC (if this protein is present). Lysylation is critical for the stimulatory effect of EF-P on peptide-bond formation. The lysylation moiety may extend toward the peptidyltransferase center and stabilize the terminal 3-CCA end of the tRNA. Hydroxylation of the C5 position on Lys-34 may allow additional potential stabilizing hydrogen-bond interactions with the P-tRNA.

The protein localises to the cytoplasm. Its pathway is protein biosynthesis; polypeptide chain elongation. Functionally, involved in peptide bond synthesis. Alleviates ribosome stalling that occurs when 3 or more consecutive Pro residues or the sequence PPG is present in a protein, possibly by augmenting the peptidyl transferase activity of the ribosome. Modification of Lys-34 is required for alleviation. The sequence is that of Elongation factor P from Enterobacter sp. (strain 638).